The following is a 3515-amino-acid chain: Microtubule-actin cross-linking factor 1, isoforms 6/7 (3515 aa).

7 disordered regions span residues 1–23 (MGKPLSRPDCLRRNPSCLGKGEE), 108–136 (VQKSAPVPPRRRPNAERKDNVNRRSWKSF), 155–196 (VSEA…TLEH), 965–1178 (TEED…AVPT), 1217–1298 (SPAA…SPAA), 1710–1730 (EELATSGGQSPTGEQIPQFQQ), and 3078–3108 (PTHAPFIEKSRSGGRKSLSQPTPPPMPILSQ). Positions 120–129 (PNAERKDNVN) are enriched in basic and acidic residues. The 13 X 13 AA approximate tandem repeat of P-T-S-P-A-A-A-V-P-T-P-E-E stretch occupies residues 157 to 245 (EAGASNPSLQ…ESEAVATSGN (89 aa)). 2 stretches are compositionally biased toward low complexity: residues 995–1031 (STPEEPASPAAAVPTPEEPTSPAAAVPTPEEPTSPAA) and 1040–1139 (TSPA…AVPT). A run of 13 repeats spans residues 1012–1024 (EPTSPAAAVPTPE), 1026–1037 (PTSPAAAVPPPE), 1038–1051 (EPTSPAAAVPTPEE), 1052–1064 (PTSPAAAVPTPEE), 1065–1077 (PTSPAAAVPTPEE), 1078–1090 (PTSPAAAVPTPEE), 1091–1103 (PTSPAAAVPTPEE), 1104–1116 (PTSPAAAVPTPEE), 1117–1129 (PASPAAAVPTPEE), 1130–1142 (PASPAAAVPTPEE), 1143–1155 (PAFPAPAVPTPEE), 1156–1168 (SASAAVAVPTPEE), and 1169–1178 (SASPAAAVPT). Residues 1140-1151 (PEEPAFPAPAVP) show a composition bias toward pro residues. Low complexity-rich tracts occupy residues 1162 to 1178 (AVPTPEESASPAAAVPT) and 1268 to 1298 (SSPAASVPTPEEPASPAAAVSNLEEPASPAA). Over residues 1715–1730 (SGGQSPTGEQIPQFQQ) the composition is skewed to polar residues. EF-hand domains are found at residues 3168–3203 (HKKSRVMDFFRRIDKDQDGKITRQEFIDGILASKFP) and 3204–3239 (TTKLEMTAVADIFDRDGDGYIDYYEFVAALHPNKDA). Asp-3181, Asp-3183, Asp-3185, Lys-3187, Glu-3192, Asp-3217, Asp-3219, Asp-3221, Tyr-3223, and Glu-3228 together coordinate Ca(2+). The GAR domain occupies 3244–3316 (TDADKIEDEV…EFLVKNDPCR (73 aa)). Residues 3332-3515 (PEGASQGMTP…ASPRTPGPKR (184 aa)) form a disordered region. Positions 3352–3386 (SSRAASPTRSSSSASQSNHSCTSMPSSPATPASGT) are enriched in low complexity. A compositionally biased stretch (polar residues) spans 3402-3426 (TFHSSRTSLAGDTSNSSSPASTGAK). Low complexity predominate over residues 3437 to 3451 (SRPGSRAGSRAGSRA). Residues 3466–3488 (ETQSACSDTSESSAAGGQGNSRR) show a composition bias toward polar residues.

It localises to the cytoplasm. The protein resides in the cytoskeleton. The protein is Microtubule-actin cross-linking factor 1, isoforms 6/7 of Homo sapiens (Human).